The sequence spans 267 residues: LexA repressor (267 aa).

Positions Met1–Arg44 are disordered. The segment covering Pro20–Lys38 has biased composition (basic and acidic residues). The segment at residues Ile65 to Thr85 is a DNA-binding region (H-T-H motif). Positions Gly111–Glu140 are disordered. The segment covering Gln112–Ser129 has biased composition (polar residues). Active-site for autocatalytic cleavage activity residues include Ser191 and Lys228.

This sequence belongs to the peptidase S24 family. Homodimer.

It carries out the reaction Hydrolysis of Ala-|-Gly bond in repressor LexA.. Functionally, represses a number of genes involved in the response to DNA damage (SOS response), including recA and lexA. In the presence of single-stranded DNA, RecA interacts with LexA causing an autocatalytic cleavage which disrupts the DNA-binding part of LexA, leading to derepression of the SOS regulon and eventually DNA repair. The sequence is that of LexA repressor from Corynebacterium jeikeium (strain K411).